Here is a 511-residue protein sequence, read N- to C-terminus: ATP synthase subunit beta, mitochondrial (511 aa).

The N-terminal 33 residues, 1-33, are a transit peptide targeting the mitochondrion; it reads MVLPRLYTATSRAAFKAAKQSAPLLSTSWKRCM. At Thr112 the chain carries Phosphothreonine. 190-197 is an ATP binding site; the sequence is GGAGVGKT. Thr237 is subject to Phosphothreonine. Position 373 is a phosphoserine (Ser373).

Belongs to the ATPase alpha/beta chains family. F-type ATPases have 2 components, CF(1) - the catalytic core - and CF(0) - the membrane proton channel. CF(1) has five subunits: alpha(3), beta(3), gamma(1), delta(1), epsilon(1). CF(0) has three main subunits: a, b and c.

Its subcellular location is the mitochondrion. The protein resides in the mitochondrion inner membrane. It catalyses the reaction ATP + H2O + 4 H(+)(in) = ADP + phosphate + 5 H(+)(out). In terms of biological role, mitochondrial membrane ATP synthase (F(1)F(0) ATP synthase or Complex V) produces ATP from ADP in the presence of a proton gradient across the membrane which is generated by electron transport complexes of the respiratory chain. F-type ATPases consist of two structural domains, F(1) - containing the extramembraneous catalytic core, and F(0) - containing the membrane proton channel, linked together by a central stalk and a peripheral stalk. During catalysis, ATP synthesis in the catalytic domain of F(1) is coupled via a rotary mechanism of the central stalk subunits to proton translocation. Subunits alpha and beta form the catalytic core in F(1). Rotation of the central stalk against the surrounding alpha(3)beta(3) subunits leads to hydrolysis of ATP in three separate catalytic sites on the beta subunits. The chain is ATP synthase subunit beta, mitochondrial (ATP2) from Saccharomyces cerevisiae (strain ATCC 204508 / S288c) (Baker's yeast).